The primary structure comprises 31 residues: Cytochrome b6-f complex subunit 6 (31 aa).

A helical transmembrane segment spans residues 4–24 (IISYFLFLIGALTLALVLFIG).

This sequence belongs to the PetL family. As to quaternary structure, the 4 large subunits of the cytochrome b6-f complex are cytochrome b6, subunit IV (17 kDa polypeptide, PetD), cytochrome f and the Rieske protein, while the 4 small subunits are PetG, PetL, PetM and PetN. The complex functions as a dimer.

The protein resides in the plastid. The protein localises to the chloroplast thylakoid membrane. In terms of biological role, component of the cytochrome b6-f complex, which mediates electron transfer between photosystem II (PSII) and photosystem I (PSI), cyclic electron flow around PSI, and state transitions. PetL is important for photoautotrophic growth as well as for electron transfer efficiency and stability of the cytochrome b6-f complex. In Marchantia polymorpha (Common liverwort), this protein is Cytochrome b6-f complex subunit 6.